The chain runs to 439 residues: UDP-N-acetylmuramoylalanine--D-glutamate ligase (439 aa).

116–122 (GSNGKTT) provides a ligand contact to ATP.

The protein belongs to the MurCDEF family.

It is found in the cytoplasm. It catalyses the reaction UDP-N-acetyl-alpha-D-muramoyl-L-alanine + D-glutamate + ATP = UDP-N-acetyl-alpha-D-muramoyl-L-alanyl-D-glutamate + ADP + phosphate + H(+). It functions in the pathway cell wall biogenesis; peptidoglycan biosynthesis. Functionally, cell wall formation. Catalyzes the addition of glutamate to the nucleotide precursor UDP-N-acetylmuramoyl-L-alanine (UMA). This is UDP-N-acetylmuramoylalanine--D-glutamate ligase from Shewanella oneidensis (strain ATCC 700550 / JCM 31522 / CIP 106686 / LMG 19005 / NCIMB 14063 / MR-1).